Here is a 304-residue protein sequence, read N- to C-terminus: Homoserine dehydrogenase (304 aa).

Residues Tyr8, Asn10, Val11, Arg38, Arg39, and Ser73 each coordinate NADP(+). Residue Tyr8 coordinates NADPH. The NADPH site is built by Val11 and Arg38. Val11 contributes to the NAD(+) binding site. NADPH-binding residues include Ser73, Ser74, Thr100, and Lys102. Ser73 serves as a coordination point for NAD(+). The NADP(+) site is built by Thr100 and Lys102. Residues Val129 and Thr133 each coordinate Na(+). 2 residues coordinate NADP(+): Gly182 and Glu185. Positions 185 and 196 each coordinate L-homoserine. Catalysis depends on Lys200, which acts as the Proton donor. Position 284 (Gly284) interacts with NADP(+). Gly284 contacts NADPH. Residue Gly284 coordinates NAD(+).

The protein belongs to the homoserine dehydrogenase family. As to quaternary structure, homodimer. It depends on a metal cation as a cofactor. The enzyme is activated by reductive cleavage of the interchain disulfide bond between the two subunits.

The enzyme catalyses L-homoserine + NADP(+) = L-aspartate 4-semialdehyde + NADPH + H(+). It carries out the reaction L-homoserine + NAD(+) = L-aspartate 4-semialdehyde + NADH + H(+). It participates in amino-acid biosynthesis; L-methionine biosynthesis via de novo pathway; L-homoserine from L-aspartate: step 3/3. Its pathway is amino-acid biosynthesis; L-threonine biosynthesis; L-threonine from L-aspartate: step 3/5. Its activity is regulated as follows. Inhibited by cysteine. Catalyzes the conversion of L-aspartate-beta-semialdehyde (L-Asa) to L-homoserine (L-Hse), the third step in the biosynthesis of threonine and methionine from aspartate. This Sulfurisphaera tokodaii (strain DSM 16993 / JCM 10545 / NBRC 100140 / 7) (Sulfolobus tokodaii) protein is Homoserine dehydrogenase.